A 459-amino-acid chain; its full sequence is Ceramide glucosyltransferase 3 (459 aa).

The helical transmembrane segment at Leu-77–Leu-97 threads the bilayer. Asp-156 is a short sequence motif (D1). Asp-208 is a short sequence motif (D2). Position 302 (Asp-302) is a short sequence motif, D3. The Proton acceptor role is filled by Asp-302. Residues Arg-338–Trp-342 carry the (Q/R)XXRW motif. 2 consecutive transmembrane segments (helical) span residues Leu-367–Leu-387 and Phe-415–Leu-435.

The protein belongs to the glycosyltransferase 2 family. Expressed in pharyngeal intestinal valve, intestinal rectal valve and hypodermis.

The protein localises to the membrane. It carries out the reaction an N-acylsphing-4-enine + UDP-alpha-D-glucose = a beta-D-glucosyl-(1&lt;-&gt;1')-N-acylsphing-4-enine + UDP + H(+). The catalysed reaction is an N-acyl-15-methylhexadecasphing-4-enine + UDP-alpha-D-glucose = an N-acyl-1-beta-D-glucosyl-15-methylhexadecasphing-4-enine + UDP + H(+). It functions in the pathway lipid metabolism; sphingolipid metabolism. Its function is as follows. Catalyzes the first glycosylation step in glycosphingolipid biosynthesis, the transfer of glucose to ceramide to produce glucosylceramides (GlcCer). GlcCer are known to contribute to the physical properties and physiological functions of membranes and may regulate signal transduction. Seems to be the major active form in the nematode. Only branched-chain sphingoid bases like 15-methylhexadecasphing-4-enine are used for generating complex sphingolipids in Caenorhabditis elegans. Together with cgt-1, plays a role in the trafficking of proteins such as mig-14 to the cell membrane in intestinal cells. This Caenorhabditis elegans protein is Ceramide glucosyltransferase 3.